A 120-amino-acid chain; its full sequence is Large ribosomal subunit protein uL24 (120 aa).

The protein belongs to the universal ribosomal protein uL24 family. Part of the 50S ribosomal subunit.

One of two assembly initiator proteins, it binds directly to the 5'-end of the 23S rRNA, where it nucleates assembly of the 50S subunit. Functionally, one of the proteins that surrounds the polypeptide exit tunnel on the outside of the subunit. The sequence is that of Large ribosomal subunit protein uL24 from Pseudarthrobacter chlorophenolicus (strain ATCC 700700 / DSM 12829 / CIP 107037 / JCM 12360 / KCTC 9906 / NCIMB 13794 / A6) (Arthrobacter chlorophenolicus).